We begin with the raw amino-acid sequence, 379 residues long: Homoserine O-succinyltransferase (379 aa).

The 310-residue stretch at 51–360 folds into the AB hydrolase-1 domain; sequence NAVLICHALS…DAPQGHDAFL (310 aa). The active-site Nucleophile is the S157. R227 provides a ligand contact to substrate. Residues D323 and H356 contribute to the active site. Substrate is bound at residue D357.

It belongs to the AB hydrolase superfamily. MetX family. In terms of assembly, homodimer.

It is found in the cytoplasm. The catalysed reaction is L-homoserine + succinyl-CoA = O-succinyl-L-homoserine + CoA. It functions in the pathway amino-acid biosynthesis; L-methionine biosynthesis via de novo pathway; O-succinyl-L-homoserine from L-homoserine: step 1/1. In terms of biological role, transfers a succinyl group from succinyl-CoA to L-homoserine, forming succinyl-L-homoserine. This is Homoserine O-succinyltransferase from Pseudomonas syringae pv. tomato (strain ATCC BAA-871 / DC3000).